The sequence spans 185 residues: Large ribosomal subunit protein uL5 (185 aa).

Belongs to the universal ribosomal protein uL5 family. In terms of assembly, part of the 50S ribosomal subunit; part of the 5S rRNA/L5/L18/L25 subcomplex. Contacts the 5S rRNA and the P site tRNA. Forms a bridge to the 30S subunit in the 70S ribosome.

Its function is as follows. This is one of the proteins that bind and probably mediate the attachment of the 5S RNA into the large ribosomal subunit, where it forms part of the central protuberance. In the 70S ribosome it contacts protein S13 of the 30S subunit (bridge B1b), connecting the 2 subunits; this bridge is implicated in subunit movement. Contacts the P site tRNA; the 5S rRNA and some of its associated proteins might help stabilize positioning of ribosome-bound tRNAs. This is Large ribosomal subunit protein uL5 from Xanthobacter autotrophicus (strain ATCC BAA-1158 / Py2).